The following is a 443-amino-acid chain: Thymidine phosphorylase (443 aa).

The protein belongs to the thymidine/pyrimidine-nucleoside phosphorylase family. Homodimer.

The catalysed reaction is thymidine + phosphate = 2-deoxy-alpha-D-ribose 1-phosphate + thymine. It participates in pyrimidine metabolism; dTMP biosynthesis via salvage pathway; dTMP from thymine: step 1/2. Its function is as follows. The enzymes which catalyze the reversible phosphorolysis of pyrimidine nucleosides are involved in the degradation of these compounds and in their utilization as carbon and energy sources, or in the rescue of pyrimidine bases for nucleotide synthesis. The sequence is that of Thymidine phosphorylase from Sodalis glossinidius (strain morsitans).